The sequence spans 589 residues: Oligo-1,6-glucosidase IMA2 (589 aa).

Aspartate 215 serves as the catalytic Nucleophile. Glutamate 277 acts as the Proton donor in catalysis.

The protein belongs to the glycosyl hydrolase 13 family.

It carries out the reaction Hydrolysis of (1-&gt;6)-alpha-D-glucosidic linkages in some oligosaccharides produced from starch and glycogen by alpha-amylase, and in isomaltose.. Alpha-glucosidase with specificity for isomaltase, methyl-alpha-glucoside, and palatinose. The sequence is that of Oligo-1,6-glucosidase IMA2 (IMA2) from Saccharomyces cerevisiae (strain ATCC 204508 / S288c) (Baker's yeast).